The chain runs to 341 residues: Twinfilin-2 (341 aa).

ADF-H domains lie at 1–131 and 169–305; these read ATEE…KHLS and GLAF…DEVH. Residue lysine 6 is modified to N6-acetyllysine. At tyrosine 301 the chain carries Phosphotyrosine. The interval 314-341 is disordered; the sequence is AFAKPKGPGGKRGHKRLIRGPGENGDDS. Residues 322 to 331 show a composition bias toward basic residues; it reads GGKRGHKRLI. Phosphoserine is present on serine 341.

This sequence belongs to the actin-binding proteins ADF family. Twinfilin subfamily. As to quaternary structure, interacts with G-actin; ADP-actin form and capping protein (CP). May also be able to interact with TWF1 and phosphoinositides, PI(4,5)P2. When bound to PI(4,5)P2, it is down-regulated. Interacts with MYO7A. In terms of processing, phosphorylated on both serine and threonine residues.

The protein localises to the cytoplasm. It localises to the cytoskeleton. Its subcellular location is the perinuclear region. The protein resides in the cell projection. It is found in the stereocilium. Its function is as follows. Actin-binding protein involved in motile and morphological processes. Inhibits actin polymerization, likely by sequestering G-actin. By capping the barbed ends of filaments, it also regulates motility. Seems to play an important role in clathrin-mediated endocytosis and distribution of endocytic organelles. May play a role in regulating the mature length of the middle and short rows of stereocilia. The protein is Twinfilin-2 (TWF2) of Pongo abelii (Sumatran orangutan).